An 853-amino-acid chain; its full sequence is MSEGSGDQSQQRPWASPRQQPIKGIVQPRVLPPFGKPTRHTNKLDYIMTTVLKEAGKHKHVWPFQKPVDAVALCIPLYHERVARPMDLKTIENRLKSTYYTCAQECIDDIETVFQNCYTFNGKEDDVTIMAQNVHEVIKKSLEQAPREEHDMDVYWGKNKKKPAKSDGGSKSSSSKKNDARGPSEAPSEAGSEVSSVTTASAAAPTVSESASVAAKPERKVAGKKTGKRKAESEDDEKPEPLRAKREVAVVKKEVHQPLLPSMKPCLKLLNDFSTKKYQEFAWPFNEPVDAEQLGLHDYHKIIKEPMDLKSMKAKMESGAYKEPSDFEHDVRLMLRNCFLYNPVGDPVHSFGLRFQEVFDRRWAELGDSSSRASSVAPQSAPIAPTPKVAKSSAPKEPKESRKEHKKETTFEASGAKSEDLMQINNALSMIREREEKLKAELAAAQAIKDKLTSVKNRREDNPNEPFPEKLINETRALCTTQVGQNASSSSASSAALRNGRSKKAASARLYGYEFDSDDEDNKMALTYEEKRNLSNLINNLPNNQLNTIISIIQRRERSALMQQQLDDSEVELDFESLGDMCLREMGAFIKTIPTLNGNGDDEKPKTSSNPTSSGATGSKGSSSLESKNGKKKKNFNMSESSDDETSNSRKRRKRESSESQSSSSSDDDSDDEDRPSIPRKSGQPPSTSREWNQSSAPPPRMGGMGGQPPMSRVPASSSTSVSAIGKNNAAASSNSYQAPKPAPVPAPTSSRPPAAPRPPSKPKKTGGASILDTLLPDTFGASPPQFFQSQPTTSATIRSPTESQPGNGEDEQTRIQRMRMEAKRARQKEDEGSVSLSNQMEMMAAFEFDNTY.

Positions 1 to 19 (MSEGSGDQSQQRPWASPRQ) are enriched in polar residues. 2 disordered regions span residues 1 to 22 (MSEG…QQPI) and 141 to 245 (SLEQ…LRAK). Positions 39–145 (RHTNKLDYIM…EVIKKSLEQA (107 aa)) constitute a Bromo 1 domain. Positions 141–153 (SLEQAPREEHDMD) are enriched in basic and acidic residues. Low complexity-rich tracts occupy residues 166 to 175 (SDGGSKSSSS) and 192 to 215 (SEVS…SVAA). Lys252 participates in a covalent cross-link: Glycyl lysine isopeptide (Lys-Gly) (interchain with G-Cter in SUMO). Residues 257–366 (QPLLPSMKPC…EVFDRRWAEL (110 aa)) enclose the Bromo 2 domain. Over residues 369–381 (SSSRASSVAPQSA) the composition is skewed to low complexity. Residues 369 to 418 (SSSRASSVAPQSAPIAPTPKVAKSSAPKEPKESRKEHKKETTFEASGAKS) are disordered. A compositionally biased stretch (basic and acidic residues) spans 394-410 (APKEPKESRKEHKKETT). Residues 419-458 (EDLMQINNALSMIREREEKLKAELAAAQAIKDKLTSVKNR) are a coiled coil. An NET domain is found at 516–601 (DSDDEDNKMA…TIPTLNGNGD (86 aa)). Disordered stretches follow at residues 594-814 (PTLN…DEQT) and 819-838 (MRME…VSLS). Over residues 612–624 (TSSGATGSKGSSS) the composition is skewed to low complexity. Residues 684-696 (QPPSTSREWNQSS) show a composition bias toward polar residues. Over residues 708–736 (QPPMSRVPASSSTSVSAIGKNNAAASSNS) the composition is skewed to low complexity. A compositionally biased stretch (polar residues) spans 786 to 807 (QFFQSQPTTSATIRSPTESQPG). A compositionally biased stretch (basic and acidic residues) spans 819 to 832 (MRMEAKRARQKEDE).

This sequence belongs to the BET family. As to quaternary structure, interacts with acetylated histone H4. Interacts (via BROMO domain 2) with smo-1 and ubc-9. As to expression, expressed in T-cells, Q-cells, V5-cells and their descendants such as somatic gonad and syncytium.

It is found in the nucleus. The protein localises to the chromosome. In terms of biological role, required for the establishment and maintenance of stable cell fate in several lineages including V5.pa, T, Z1/Z4 and QR lineages probably by repressing the expression of cell fate determinants. Required to maintain non-distal tip cell (DTC) fate of somatic gonadal cells through the htz-1-mediated repression of transcription factor ceh-22. Regulates the subnuclear localization of histone variant htz-1 in somatic gonadal cells. Plays a role in the attenuation of the let-60/ras pathway, probably by preventing expression of activators of the pathway. Involved in adult locomotion. Acts together with the sumoylation pathway to prevent muscle myosin depletion in aging adults probably by preventing myoblast growth factor receptor egl-15 overexpression. May play a role in vulva development. This chain is Bromodomain-containing protein bet-1, found in Caenorhabditis elegans.